The chain runs to 154 residues: Ribosome maturation factor RimP (154 aa).

Belongs to the RimP family.

It is found in the cytoplasm. In terms of biological role, required for maturation of 30S ribosomal subunits. The protein is Ribosome maturation factor RimP of Prochlorococcus marinus (strain MIT 9303).